A 201-amino-acid polypeptide reads, in one-letter code: UPF0301 protein Atu0781 (201 aa).

It belongs to the UPF0301 (AlgH) family.

The chain is UPF0301 protein Atu0781 from Agrobacterium fabrum (strain C58 / ATCC 33970) (Agrobacterium tumefaciens (strain C58)).